The following is a 366-amino-acid chain: Chorismate synthase (366 aa).

Arginine 48 and arginine 54 together coordinate NADP(+). FMN-binding positions include 125–127 (RSS), 238–239 (NA), glycine 278, 293–297 (KPTSS), and arginine 319.

The protein belongs to the chorismate synthase family. In terms of assembly, homotetramer. Requires FMNH2 as cofactor.

It carries out the reaction 5-O-(1-carboxyvinyl)-3-phosphoshikimate = chorismate + phosphate. It functions in the pathway metabolic intermediate biosynthesis; chorismate biosynthesis; chorismate from D-erythrose 4-phosphate and phosphoenolpyruvate: step 7/7. Functionally, catalyzes the anti-1,4-elimination of the C-3 phosphate and the C-6 proR hydrogen from 5-enolpyruvylshikimate-3-phosphate (EPSP) to yield chorismate, which is the branch point compound that serves as the starting substrate for the three terminal pathways of aromatic amino acid biosynthesis. This reaction introduces a second double bond into the aromatic ring system. In Laribacter hongkongensis (strain HLHK9), this protein is Chorismate synthase.